A 78-amino-acid chain; its full sequence is MKFRLVKLTAISSYSNENISFAVEYKKYFFSKWKQYYKTNWVCIDRPYSWKSDLEKCQKLLSTLKERGTTHIKTVIGK.

This is an uncharacterized protein from Escherichia coli (Bacteriophage T4).